The following is a 513-amino-acid chain: ATP synthase subunit alpha (513 aa).

169–176 (GDRQTGKT) contacts ATP.

Belongs to the ATPase alpha/beta chains family. As to quaternary structure, F-type ATPases have 2 components, CF(1) - the catalytic core - and CF(0) - the membrane proton channel. CF(1) has five subunits: alpha(3), beta(3), gamma(1), delta(1), epsilon(1). CF(0) has three main subunits: a(1), b(2) and c(9-12). The alpha and beta chains form an alternating ring which encloses part of the gamma chain. CF(1) is attached to CF(0) by a central stalk formed by the gamma and epsilon chains, while a peripheral stalk is formed by the delta and b chains.

It localises to the cell inner membrane. It catalyses the reaction ATP + H2O + 4 H(+)(in) = ADP + phosphate + 5 H(+)(out). Functionally, produces ATP from ADP in the presence of a proton gradient across the membrane. The alpha chain is a regulatory subunit. This chain is ATP synthase subunit alpha, found in Haemophilus influenzae (strain PittEE).